The chain runs to 357 residues: Alanine racemase (357 aa).

Lysine 34 functions as the Proton acceptor; specific for D-alanine in the catalytic mechanism. Residue lysine 34 is modified to N6-(pyridoxal phosphate)lysine. Arginine 130 is a binding site for substrate. Tyrosine 253 (proton acceptor; specific for L-alanine) is an active-site residue. Methionine 301 is a substrate binding site.

It belongs to the alanine racemase family. The cofactor is pyridoxal 5'-phosphate.

The catalysed reaction is L-alanine = D-alanine. It participates in amino-acid biosynthesis; D-alanine biosynthesis; D-alanine from L-alanine: step 1/1. In terms of biological role, catalyzes the interconversion of L-alanine and D-alanine. May also act on other amino acids. The polypeptide is Alanine racemase (alr) (Mannheimia succiniciproducens (strain KCTC 0769BP / MBEL55E)).